The primary structure comprises 166 residues: 16S rRNA aminocarboxypropyltransferase (166 aa).

S-adenosyl-L-methionine is bound by residues Thr17, Ile62, Leu84, Tyr99, and Ser103.

It belongs to the TDD superfamily. TSR3 family.

It localises to the cytoplasm. It catalyses the reaction an N(1)-methylpseudouridine in rRNA + S-adenosyl-L-methionine = N(1)-methyl-N(3)-[(3S)-3-amino-3-carboxypropyl]pseudouridine in rRNA + S-methyl-5'-thioadenosine + H(+). Aminocarboxypropyltransferase that catalyzes the aminocarboxypropyl transfer on pseudouridine corresponding to position 914 in M.jannaschii 16S rRNA. It constitutes the last step in biosynthesis of the hypermodified N1-methyl-N3-(3-amino-3-carboxypropyl) pseudouridine (m1acp3-Psi). The polypeptide is 16S rRNA aminocarboxypropyltransferase (Saccharolobus islandicus (strain M.16.27) (Sulfolobus islandicus)).